Consider the following 211-residue polypeptide: Large ribosomal subunit protein eL13 (211 aa).

The residue at position 16 (Lys16) is an N6-acetyllysine. Residues Ser52, Ser77, and Ser106 each carry the phosphoserine modification. Residues Lys123 and Lys145 each participate in a glycyl lysine isopeptide (Lys-Gly) (interchain with G-Cter in SUMO2) cross-link. Lys174 is covalently cross-linked (Glycyl lysine isopeptide (Lys-Gly) (interchain with G-Cter in SUMO1); alternate). Glycyl lysine isopeptide (Lys-Gly) (interchain with G-Cter in SUMO2); alternate cross-links involve residues Lys174 and Lys177. Lys177 is subject to N6-acetyllysine; alternate.

It belongs to the eukaryotic ribosomal protein eL13 family. Component of the 60S large ribosomal subunit (LSU).

The protein localises to the cytoplasm. Functionally, component of the ribosome, a large ribonucleoprotein complex responsible for the synthesis of proteins in the cell. The small ribosomal subunit (SSU) binds messenger RNAs (mRNAs) and translates the encoded message by selecting cognate aminoacyl-transfer RNA (tRNA) molecules. The large subunit (LSU) contains the ribosomal catalytic site termed the peptidyl transferase center (PTC), which catalyzes the formation of peptide bonds, thereby polymerizing the amino acids delivered by tRNAs into a polypeptide chain. The nascent polypeptides leave the ribosome through a tunnel in the LSU and interact with protein factors that function in enzymatic processing, targeting, and the membrane insertion of nascent chains at the exit of the ribosomal tunnel. As part of the LSU, it is probably required for its formation and the maturation of rRNAs. Plays a role in bone development. This is Large ribosomal subunit protein eL13 (Rpl13) from Rattus norvegicus (Rat).